The sequence spans 923 residues: Mitochondrial 10-formyltetrahydrofolate dehydrogenase (923 aa).

Residues methionine 1–phenylalanine 19 constitute a mitochondrion; not cleaved transit peptide. A hydrolase domain region spans residues leucine 23–glutamate 331. Serine 31 carries the post-translational modification Phosphoserine. Lysine 60 bears the N6-succinyllysine mark. Residue glutamine 110–isoleucine 112 coordinates (6R)-10-formyltetrahydrofolate. The Proton donor role is filled by histidine 128. (6R)-10-formyltetrahydrofolate is bound at residue aspartate 164. In terms of domain architecture, Carrier spans alanine 339 to leucine 416. Residue serine 375 is modified to O-(pantetheine 4'-phosphoryl)serine. An aldehyde dehydrogenase domain region spans residues methionine 438–tyrosine 923. NADP(+)-binding positions include isoleucine 592 to tryptophan 594 and lysine 618 to glutamine 621. The residue at position 650 (serine 650) is a Phosphoserine. Residues glycine 651–glutamine 656 and glycine 671–serine 672 each bind NADP(+). Position 681 is an N6-succinyllysine (lysine 681). Glutamate 694 (proton acceptor) is an active-site residue. Glutamate 694–leucine 695 is a binding site for NADP(+). Cysteine 728 (proton donor) is an active-site residue. Lysine 778 serves as a coordination point for NADP(+). Lysine 788 carries the post-translational modification N6-succinyllysine. Residue glutamate 825–phenylalanine 827 participates in NADP(+) binding. Position 903 is an N6-acetyllysine (lysine 903).

This sequence in the N-terminal section; belongs to the GART family. In the C-terminal section; belongs to the aldehyde dehydrogenase family. ALDH1L subfamily. Post-translationally, phosphopantetheinylation at Ser-375 by AASDHPPT is required for the formyltetrahydrofolate dehydrogenase activity. Highly expressed in pancreas, heart, brain and skeletal muscle.

It localises to the mitochondrion. The catalysed reaction is (6R)-10-formyltetrahydrofolate + NADP(+) + H2O = (6S)-5,6,7,8-tetrahydrofolate + CO2 + NADPH + H(+). Functionally, mitochondrial 10-formyltetrahydrofolate dehydrogenase that catalyzes the NADP(+)-dependent conversion of 10-formyltetrahydrofolate to tetrahydrofolate and carbon dioxide. The polypeptide is Mitochondrial 10-formyltetrahydrofolate dehydrogenase (Homo sapiens (Human)).